A 180-amino-acid polypeptide reads, in one-letter code: Putative manganese efflux pump MntP (180 aa).

A run of 6 helical transmembrane segments spans residues 6 to 26 (LMAL…GIGL), 34 to 54 (ILQI…TGWL), 67 to 87 (AAVI…WAAW), 102 to 122 (FWGL…AGFT), 131 to 151 (LLAA…GLVF), and 160 to 180 (GERA…KLFF).

This sequence belongs to the MntP (TC 9.B.29) family.

It localises to the cell membrane. Functionally, probably functions as a manganese efflux pump. The polypeptide is Putative manganese efflux pump MntP (Pelotomaculum thermopropionicum (strain DSM 13744 / JCM 10971 / SI)).